Consider the following 333-residue polypeptide: D-fructose 1,6-bisphosphatase class 2/sedoheptulose 1,7-bisphosphatase (333 aa).

Mn(2+) is bound by residues Asp33, Glu57, Asp85, and Glu88. Substrate-binding positions include Glu88–Thr90, Tyr119, Arg164–Arg166, and Asp186–Asp188. Glu213 contributes to the Mn(2+) binding site.

Belongs to the FBPase class 2 family. As to quaternary structure, homotetramer. It depends on Mn(2+) as a cofactor.

It carries out the reaction beta-D-fructose 1,6-bisphosphate + H2O = beta-D-fructose 6-phosphate + phosphate. It catalyses the reaction D-sedoheptulose 1,7-bisphosphate + H2O = D-sedoheptulose 7-phosphate + phosphate. Its pathway is carbohydrate biosynthesis; Calvin cycle. Functionally, catalyzes the hydrolysis of fructose 1,6-bisphosphate (Fru 1,6-P2) and sedoheptulose 1,7-bisphosphate (Sed 1,7-P2) to fructose 6-phosphate and sedoheptulose 7-phosphate, respectively. This Prochlorococcus marinus (strain MIT 9312) protein is D-fructose 1,6-bisphosphatase class 2/sedoheptulose 1,7-bisphosphatase.